Reading from the N-terminus, the 767-residue chain is Lysyl oxidase homolog 2 (767 aa).

The first 19 residues, 1–19 (MLVTHIFLLTLSLSVPTLG), serve as a signal peptide directing secretion. SRCR domains are found at residues 51–152 (VRLA…VQCS), 181–295 (IRAI…VSCT), 319–418 (VRLR…VRCN), and 428–537 (VRLS…VSCV). 9 disulfide bridges follow: Cys77–Cys141, Cys90–Cys151, Cys121–Cys131, Cys211–Cys284, Cys224–Cys294, Cys258–Cys268, Cys344–Cys407, Cys357–Cys417, and Cys388–Cys398. A glycan (N-linked (GlcNAc...) asparagine) is linked at Asn281. An N-linked (GlcNAc...) asparagine glycan is attached at Asn448. Disulfide bonds link Cys457/Cys523, Cys470/Cys536, and Cys504/Cys514. The tract at residues 541–744 (PDLVLNAALV…WMYNCHIGGS (204 aa)) is lysyl-oxidase like. The Ca(2+) site is built by Asp542 and Leu543. 4 cysteine pairs are disulfide-bonded: Cys566-Cys618, Cys572-Cys688, Cys650-Cys666, and Cys656-Cys678. Positions 619, 621, and 623 each coordinate Cu cation. N-linked (GlcNAc...) asparagine glycosylation occurs at Asn637. The segment at residues 646–682 (KASFCLEDSECETDVQKQYACANFGEQGITVGCWDVY) is a cross-link (lysine tyrosylquinone (Lys-Tyr)). Position 682 is a 2',4',5'-topaquinone (Tyr682). Residues Glu715, Asp717, Asn720, and Asn721 each contribute to the Ca(2+) site. Residues Cys725 and Cys739 are joined by a disulfide bond.

The protein belongs to the lysyl oxidase family. It depends on Cu cation as a cofactor. The cofactor is lysine tyrosylquinone residue. Post-translationally, the lysine tyrosylquinone cross-link (LTQ) is generated by condensation of the epsilon-amino group of a lysine with a topaquinone produced by oxidation of tyrosine.

It localises to the secreted. The protein localises to the extracellular space. It is found in the extracellular matrix. The protein resides in the basement membrane. Its subcellular location is the nucleus. It localises to the chromosome. The protein localises to the endoplasmic reticulum. It catalyses the reaction L-lysyl-[protein] + O2 + H2O = (S)-2-amino-6-oxohexanoyl-[protein] + H2O2 + NH4(+). Its function is as follows. Mediates the post-translational oxidative deamination of lysine residues on target proteins leading to the formation of deaminated lysine (allysine). Acts as a transcription corepressor and specifically mediates deamination of trimethylated 'Lys-4' of histone H3 (H3K4me3), a specific tag for epigenetic transcriptional activation. Shows no activity against histone H3 when it is trimethylated on 'Lys-9' (H3K9me3) or 'Lys-27' (H3K27me3) or when 'Lys-4' is monomethylated (H3K4me1) or dimethylated (H3K4me2). Also mediates deamination of methylated TAF10, a member of the transcription factor IID (TFIID) complex, which induces release of TAF10 from promoters, leading to inhibition of TFIID-dependent transcription. LOXL2-mediated deamination of TAF10 results in transcriptional repression of genes required for embryonic stem cell pluripotency. Involved in epithelial to mesenchymal transition (EMT) and participates in repression of E-cadherin, probably by mediating deamination of histone H3. When secreted into the extracellular matrix, promotes cross-linking of extracellular matrix proteins by mediating oxidative deamination of peptidyl lysine residues in precursors to fibrous collagen and elastin. Acts as a regulator of sprouting angiogenesis, probably via collagen IV scaffolding. Acts as a regulator of chondrocyte differentiation, probably by regulating expression of factors that control chondrocyte differentiation. The chain is Lysyl oxidase homolog 2 (loxl2) from Xenopus tropicalis (Western clawed frog).